Here is a 258-residue protein sequence, read N- to C-terminus: Putative phosphoenolpyruvate synthase regulatory protein (258 aa).

146-153 (GVSRVGKT) is an ADP binding site.

This sequence belongs to the pyruvate, phosphate/water dikinase regulatory protein family. PSRP subfamily.

It catalyses the reaction [pyruvate, water dikinase] + ADP = [pyruvate, water dikinase]-phosphate + AMP + H(+). It carries out the reaction [pyruvate, water dikinase]-phosphate + phosphate + H(+) = [pyruvate, water dikinase] + diphosphate. Its function is as follows. Bifunctional serine/threonine kinase and phosphorylase involved in the regulation of the phosphoenolpyruvate synthase (PEPS) by catalyzing its phosphorylation/dephosphorylation. The protein is Putative phosphoenolpyruvate synthase regulatory protein of Thiobacillus denitrificans (strain ATCC 25259 / T1).